Consider the following 256-residue polypeptide: Ciliary microtubule associated protein 1A (256 aa).

STPGR repeat units lie at residues 66–92 (PGPG…IYGR), 181–206 (PGPG…MTAR), and 217–242 (PGPG…FGIR).

Belongs to the CIMAP family.

It is found in the cytoplasm. It localises to the cytoskeleton. Its subcellular location is the flagellum axoneme. Its function is as follows. Outer dense fibers are filamentous structures located on the outside of the axoneme in the midpiece and principal piece of the mammalian sperm tail. May help to maintain the passive elastic structures and elastic recoil of the sperm tail. The sequence is that of Ciliary microtubule associated protein 1A (cimap1a) from Xenopus tropicalis (Western clawed frog).